The chain runs to 164 residues: Transcriptional regulator MraZ (164 aa).

2 consecutive SpoVT-AbrB domains span residues 7-57 and 86-129; these read THQN…TVGA and AYPL…NPEA. Positions 133–164 are disordered; that stretch reads RRQAARSRARTLATSRRPASAPAAGNTAGAAE. Residues 142–164 show a composition bias toward low complexity; that stretch reads RTLATSRRPASAPAAGNTAGAAE.

It belongs to the MraZ family. Forms oligomers.

It localises to the cytoplasm. It is found in the nucleoid. The polypeptide is Transcriptional regulator MraZ (Gluconobacter oxydans (strain 621H) (Gluconobacter suboxydans)).